We begin with the raw amino-acid sequence, 904 residues long: Auxilin-related protein 1 (904 aa).

3 disordered regions span residues A46–D99, S150–K731, and S749–R776. A compositionally biased stretch (basic and acidic residues) spans D59–F69. A compositionally biased stretch (low complexity) spans Y81–A95. The segment covering K178–G188 has biased composition (basic and acidic residues). Positions R201 to T215 are enriched in low complexity. Residues V232 to E244 show a composition bias toward acidic residues. The span at S245 to S271 shows a compositional bias: basic and acidic residues. A compositionally biased stretch (pro residues) spans S370 to T383. Positions S394 to Q419 are enriched in polar residues. The stretch at S456 to A663 forms a coiled coil. 2 stretches are compositionally biased toward basic and acidic residues: residues D462–A570 and T581–G660. Residues R619–K640 enclose the R domain. The segment covering R661 to E673 has biased composition (low complexity). The span at N674–N697 shows a compositional bias: polar residues. A coiled-coil region spans residues E762–R804. Over residues E764–R776 the composition is skewed to basic and acidic residues. The J domain maps to C839–F904.

In terms of assembly, interacts with SH3P1.

It localises to the cell membrane. The protein localises to the golgi apparatus. Its subcellular location is the trans-Golgi network. It is found in the endoplasmic reticulum. The protein resides in the cytoplasmic vesicle. In terms of biological role, promotes uncoating of clathrin-coated vesicles. May interact directly with clathrin. This Arabidopsis thaliana (Mouse-ear cress) protein is Auxilin-related protein 1.